A 311-amino-acid polypeptide reads, in one-letter code: Pyrimidine-specific ribonucleoside hydrolase RihA (311 aa).

Residue His240 is part of the active site.

This sequence belongs to the IUNH family. RihA subfamily.

In terms of biological role, hydrolyzes cytidine or uridine to ribose and cytosine or uracil, respectively. This is Pyrimidine-specific ribonucleoside hydrolase RihA from Salmonella choleraesuis (strain SC-B67).